Reading from the N-terminus, the 428-residue chain is Tyrosine--tRNA ligase (428 aa).

L-tyrosine is bound at residue tyrosine 36. Residues 41 to 50 carry the 'HIGH' region motif; it reads PTARSLHIGS. Residues tyrosine 169 and glutamine 173 each coordinate L-tyrosine. The 'KMSKS' region motif lies at 229–233; that stretch reads KMGKT. An ATP-binding site is contributed by lysine 232. One can recognise an S4 RNA-binding domain in the interval 361–427; the sequence is IPAYEIMHEC…GKKKYMIIKV (67 aa).

The protein belongs to the class-I aminoacyl-tRNA synthetase family. TyrS type 1 subfamily. In terms of assembly, homodimer.

It localises to the cytoplasm. It catalyses the reaction tRNA(Tyr) + L-tyrosine + ATP = L-tyrosyl-tRNA(Tyr) + AMP + diphosphate + H(+). Catalyzes the attachment of tyrosine to tRNA(Tyr) in a two-step reaction: tyrosine is first activated by ATP to form Tyr-AMP and then transferred to the acceptor end of tRNA(Tyr). The polypeptide is Tyrosine--tRNA ligase (Syntrophus aciditrophicus (strain SB)).